The sequence spans 246 residues: 2-deoxyglucose-6-phosphate phosphatase 2 (246 aa).

Aspartate 83 (nucleophile) is an active-site residue. A Mg(2+)-binding site is contributed by aspartate 83. Residues aspartate 83, glutamate 92, and 146-149 (DVKN) each bind substrate. Aspartate 183 contributes to the Mg(2+) binding site.

This sequence belongs to the HAD-like hydrolase superfamily. DOG/GPP family. It depends on Mg(2+) as a cofactor.

It carries out the reaction 2-deoxy-D-glucose 6-phosphate + H2O = 2-deoxy-D-glucose + phosphate. Its function is as follows. Phosphatase that is active on 2-deoxy-D-glucose 6-phosphate (2-DOG-6P), but not very active on fructose-1-P. The sequence is that of 2-deoxyglucose-6-phosphate phosphatase 2 from Saccharomyces cerevisiae (strain ATCC 204508 / S288c) (Baker's yeast).